The sequence spans 338 residues: Probable arabinan endo-1,5-alpha-L-arabinosidase A (338 aa).

The first 20 residues, 1–20, serve as a signal peptide directing secretion; it reads MRASFVVTAPLLAAAVHGYA. Asp33 (proton acceptor) is an active-site residue. The Proton donor role is filled by Glu217.

Belongs to the glycosyl hydrolase 43 family.

It localises to the secreted. The enzyme catalyses Endohydrolysis of (1-&gt;5)-alpha-arabinofuranosidic linkages in (1-&gt;5)-arabinans.. Its pathway is glycan metabolism; L-arabinan degradation. In terms of biological role, endo-1,5-alpha-L-arabinanase involved in degradation of pectin. Its preferred substrate is linear 1,5-alpha-L-arabinan. The protein is Probable arabinan endo-1,5-alpha-L-arabinosidase A (abnA) of Aspergillus terreus (strain NIH 2624 / FGSC A1156).